The sequence spans 199 residues: MAKVLVLYYSAYGHIETMAQAVAEGARAAGATVDIKRVPELVPAEVAKASHYKLDQAAPVASIDDLANYDAIIVGTGTRFGRMASQMANFLDQAGGLWAKGALHGKVGGAFTSTATQHGGQETTLFSIITNLLHFGMVVVGLNYGFAGQMTLDEVTGGSPYGATTITGGDGSRQPSANELAGARYQGQVIAETAIKLHG.

In terms of domain architecture, Flavodoxin-like spans 4–190 (VLVLYYSAYG…AGARYQGQVI (187 aa)). FMN is bound by residues 10–15 (SAYGHI) and 78–80 (TRF). An NAD(+)-binding site is contributed by Y12. W98 serves as a coordination point for substrate. FMN is bound by residues 113 to 119 (STATQHG) and H134.

The protein belongs to the WrbA family. It depends on FMN as a cofactor.

It catalyses the reaction a quinone + NADH + H(+) = a quinol + NAD(+). It carries out the reaction a quinone + NADPH + H(+) = a quinol + NADP(+). In Rhodopseudomonas palustris (strain BisA53), this protein is NAD(P)H dehydrogenase (quinone).